The sequence spans 75 residues: Putative snRNP Sm-like protein (75 aa).

Positions 4 to 75 constitute a Sm domain; the sequence is RPLDVIHRSL…NVLAISPTEE (72 aa).

Belongs to the snRNP Sm proteins family.

In Pyrococcus horikoshii (strain ATCC 700860 / DSM 12428 / JCM 9974 / NBRC 100139 / OT-3), this protein is Putative snRNP Sm-like protein.